Here is a 182-residue protein sequence, read N- to C-terminus: Glycerol-3-phosphate acyltransferase 1 (182 aa).

The next 5 membrane-spanning stretches (helical) occupy residues 5 to 25, 54 to 74, 81 to 101, 117 to 137, and 157 to 177; these read MQFL…AYIV, GYFI…VSIA, STFV…PIVF, IAFD…FYLI, and ILYS…VLIL.

The protein belongs to the PlsY family. As to quaternary structure, probably interacts with PlsX.

The protein localises to the cell membrane. The enzyme catalyses an acyl phosphate + sn-glycerol 3-phosphate = a 1-acyl-sn-glycero-3-phosphate + phosphate. The protein operates within lipid metabolism; phospholipid metabolism. Catalyzes the transfer of an acyl group from acyl-phosphate (acyl-PO(4)) to glycerol-3-phosphate (G3P) to form lysophosphatidic acid (LPA). This enzyme utilizes acyl-phosphate as fatty acyl donor, but not acyl-CoA or acyl-ACP. The chain is Glycerol-3-phosphate acyltransferase 1 from Bacillus cereus (strain ATCC 10987 / NRS 248).